We begin with the raw amino-acid sequence, 104 residues long: QACSETSDCLEGLECSGNQCLIPYDGDDSCVTGFDCVIGVGCVYDNGNPGRCIRDHRCKGDKKDICTNPATECDEDKVCGYKEGETCYGPCRKGLTCRNTRCQK.

Contains 8 disulfide bonds. Expressed by the venom duct.

The protein localises to the secreted. Functionally, acts as a neurotoxin by inhibiting an ion channel. This Iotyrris olangoensis (Sea snail) protein is Turripeptide OL55.